A 340-amino-acid polypeptide reads, in one-letter code: ATP-dependent 6-phosphofructokinase (340 aa).

Position 11 (Gly11) interacts with ATP. ADP is bound at residue 21–25 (RAVVR). ATP contacts are provided by residues 72 to 73 (RY) and 102 to 105 (GDGS). Asp103 is a binding site for Mg(2+). 125–127 (TID) lines the substrate pocket. Asp127 (proton acceptor) is an active-site residue. Arg154 contacts ADP. Substrate contacts are provided by residues Arg162 and 169–171 (MGR). ADP contacts are provided by residues 185–187 (GAD), Lys211, and 213–215 (KNH). Substrate-binding positions include Glu222, Arg244, and 250 to 253 (HIQR).

The protein belongs to the phosphofructokinase type A (PFKA) family. ATP-dependent PFK group I subfamily. Prokaryotic clade 'B1' sub-subfamily. Homotetramer. Mg(2+) serves as cofactor.

It is found in the cytoplasm. The catalysed reaction is beta-D-fructose 6-phosphate + ATP = beta-D-fructose 1,6-bisphosphate + ADP + H(+). It functions in the pathway carbohydrate degradation; glycolysis; D-glyceraldehyde 3-phosphate and glycerone phosphate from D-glucose: step 3/4. Its activity is regulated as follows. Allosterically activated by ADP and other diphosphonucleosides, and allosterically inhibited by phosphoenolpyruvate. Catalyzes the phosphorylation of D-fructose 6-phosphate to fructose 1,6-bisphosphate by ATP, the first committing step of glycolysis. The sequence is that of ATP-dependent 6-phosphofructokinase from Lactococcus lactis subsp. lactis (Streptococcus lactis).